A 277-amino-acid polypeptide reads, in one-letter code: Diaminopimelate epimerase (277 aa).

Positions 13, 46, and 65 each coordinate substrate. Cysteine 74 (proton donor) is an active-site residue. Residues 75 to 76 (GN), asparagine 158, asparagine 191, and 209 to 210 (ER) each bind substrate. The active-site Proton acceptor is the cysteine 218. 219–220 (GT) is a binding site for substrate.

It belongs to the diaminopimelate epimerase family. Homodimer.

Its subcellular location is the cytoplasm. The catalysed reaction is (2S,6S)-2,6-diaminopimelate = meso-2,6-diaminopimelate. It functions in the pathway amino-acid biosynthesis; L-lysine biosynthesis via DAP pathway; DL-2,6-diaminopimelate from LL-2,6-diaminopimelate: step 1/1. Catalyzes the stereoinversion of LL-2,6-diaminopimelate (L,L-DAP) to meso-diaminopimelate (meso-DAP), a precursor of L-lysine and an essential component of the bacterial peptidoglycan. The sequence is that of Diaminopimelate epimerase from Nitrosospira multiformis (strain ATCC 25196 / NCIMB 11849 / C 71).